The chain runs to 76 residues: uncharacterized protein (76 aa).

The segment at 1 to 28 is disordered; that stretch reads MSTEKLEASEEPQAPLANTSETNSIKGD. Positions 16 to 26 are enriched in polar residues; it reads LANTSETNSIK.

The protein resides in the cytoplasm. Its subcellular location is the bud. It is found in the bud neck. This is an uncharacterized protein from Saccharomyces cerevisiae (strain ATCC 204508 / S288c) (Baker's yeast).